A 1779-amino-acid chain; its full sequence is Fibronectin type III domain-containing protein 1 (1779 aa).

The signal sequence occupies residues 1–29 (MAPEARASPRLLLRAALLLLAALLPVASS). Fibronectin type-III domains follow at residues 33 to 126 (PVDH…KAPR), 103 to 203 (PNKP…AEED), 207 to 302 (VPED…TPES), and 307 to 402 (APEN…IPTT). Residues 400–413 (PTTSSTEASVQPNG) are compositionally biased toward polar residues. Disordered regions lie at residues 400 to 442 (PTTS…MPPA), 459 to 1108 (NGVA…RNLD), 1120 to 1227 (EENT…KPNG), and 1330 to 1401 (PTTT…PPGT). Over residues 423–437 (QQPSSSAPKVAASSQ) the composition is skewed to low complexity. Positions 493–506 (NPRSSRLETLNQKQ) are enriched in polar residues. Positions 534–554 (SRKEGMDRRGPSLDPHPHPRV) are enriched in basic and acidic residues. Polar residues-rich tracts occupy residues 557-570 (SASS…STDN) and 590-607 (SSGS…TSAP). A compositionally biased stretch (low complexity) spans 629-640 (ASSSTSRQSHSS). Serine 651 carries the post-translational modification Phosphoserine. The segment covering 676–694 (HASSSHTTSRTASSSHPSA) has biased composition (low complexity). Phosphoserine is present on serine 699. Positions 707-720 (DSDRAAEDTIRRAE) are enriched in basic and acidic residues. Composition is skewed to polar residues over residues 763 to 784 (PSVS…SLPA) and 861 to 875 (PLSS…STTD). Low complexity predominate over residues 879–904 (PQTSPASTSRQPSPARPPASRSQPSP). Composition is skewed to polar residues over residues 957–971 (APQN…TYED) and 1003–1020 (VGSQ…SQAG). The segment covering 1085 to 1097 (LSTSVKKWPSSSS) has biased composition (low complexity). Residues 1098–1108 (PRDKYADRNLD) are compositionally biased toward basic and acidic residues. Composition is skewed to polar residues over residues 1147 to 1159 (NPAT…NTHS) and 1166 to 1177 (RAPSSYSSTTPM). Over residues 1330–1389 (PTTTMPPSTTTTTVPPTTTLPPTTTTTRRTTTTRRTTTTRRPTTTTRATRRTTTTTTTPE) the composition is skewed to low complexity. The Fibronectin type-III 5 domain occupies 1543–1637 (APRNITVVAM…PSVSFVTESD (95 aa)). N-linked (GlcNAc...) asparagine glycosylation occurs at asparagine 1546.

The protein resides in the secreted. May be an activator of G protein signaling. This is Fibronectin type III domain-containing protein 1 (Fndc1) from Rattus norvegicus (Rat).